We begin with the raw amino-acid sequence, 483 residues long: ATP synthase subunit beta, chloroplastic (483 aa).

163-170 is a binding site for ATP; that stretch reads GGAGVGKT.

The protein belongs to the ATPase alpha/beta chains family. In terms of assembly, F-type ATPases have 2 components, CF(1) - the catalytic core - and CF(0) - the membrane proton channel. CF(1) has five subunits: alpha(3), beta(3), gamma(1), delta(1), epsilon(1). CF(0) has four main subunits: a(1), b(1), b'(1) and c(9-12).

The protein resides in the plastid. The protein localises to the chloroplast thylakoid membrane. The catalysed reaction is ATP + H2O + 4 H(+)(in) = ADP + phosphate + 5 H(+)(out). Its function is as follows. Produces ATP from ADP in the presence of a proton gradient across the membrane. The catalytic sites are hosted primarily by the beta subunits. This chain is ATP synthase subunit beta, chloroplastic, found in Ostreococcus tauri.